The sequence spans 1436 residues: Antigen WC1.1 (1436 aa).

Positions 1–25 (MALGRHLSLRGLCVLLLGTMVGGQA) are cleaved as a signal peptide. 3 consecutive SRCR domains span residues 28-131 (LRLK…VVCS), 134-234 (VRLA…VVCS), and 239-340 (VRLM…VICS). Cystine bridges form between Cys66-Cys130 and Cys97-Cys107. Residue Asn162 is glycosylated (N-linked (GlcNAc...) asparagine). Disulfide bonds link Cys172/Cys233 and Cys203/Cys213. N-linked (GlcNAc...) asparagine glycosylation is found at Asn244 and Asn256. Intrachain disulfides connect Cys265–Cys329, Cys278–Cys339, and Cys309–Cys319. Asn351, Asn424, and Asn444 each carry an N-linked (GlcNAc...) asparagine glycan. SRCR domains lie at 376–476 (LRLV…VICS), 481–581 (LRMV…IWCA), 586–686 (IRLV…VICS), 689–789 (VRLA…VVCS), and 794–895 (VQLM…VICS). 3 disulfide bridges follow: Cys401–Cys465, Cys414–Cys475, and Cys445–Cys455. N-linked (GlcNAc...) asparagine glycans are attached at residues Asn499 and Asn531. Cystine bridges form between Cys506/Cys570, Cys519/Cys580, Cys550/Cys560, Cys611/Cys675, Cys624/Cys685, and Cys655/Cys665. An N-linked (GlcNAc...) asparagine glycan is attached at Asn717. Intrachain disulfides connect Cys727–Cys788 and Cys758–Cys768. The N-linked (GlcNAc...) asparagine glycan is linked to Asn799. Disulfide bonds link Cys820–Cys884, Cys833–Cys894, and Cys864–Cys874. N-linked (GlcNAc...) asparagine glycosylation is found at Asn897, Asn979, and Asn999. SRCR domains are found at residues 931 to 1031 (LRLV…VICS), 1036 to 1136 (LRMV…ISCE), and 1155 to 1255 (LRLR…VRCS). 3 disulfides stabilise this stretch: Cys956/Cys1020, Cys969/Cys1030, and Cys1000/Cys1010. Residues Asn1054 and Asn1086 are each glycosylated (N-linked (GlcNAc...) asparagine). Intrachain disulfides connect Cys1061/Cys1125, Cys1074/Cys1135, and Cys1105/Cys1115. N-linked (GlcNAc...) asparagine glycosylation is found at Asn1173 and Asn1214. Disulfide bonds link Cys1180–Cys1244, Cys1193–Cys1254, and Cys1224–Cys1234. Residues 1337–1410 (EGLGSPDQMT…PGEGEESFWL (74 aa)) form a disordered region. Residues 1348–1358 (VPDENYDDAEE) are compositionally biased toward acidic residues. The span at 1384–1393 (RSSQTGSFLN) shows a compositional bias: polar residues. Asn1393 carries N-linked (GlcNAc...) asparagine glycosylation.

As to expression, expressed on subsets of CD4-CD8- gamma delta T lymphocytes.

It localises to the secreted. The sequence is that of Antigen WC1.1 from Bos taurus (Bovine).